The chain runs to 619 residues: Chaperone protein HscA homolog (619 aa).

It belongs to the heat shock protein 70 family.

In terms of biological role, chaperone involved in the maturation of iron-sulfur cluster-containing proteins. Has a low intrinsic ATPase activity which is markedly stimulated by HscB. The protein is Chaperone protein HscA homolog of Methylococcus capsulatus (strain ATCC 33009 / NCIMB 11132 / Bath).